Here is a 1070-residue protein sequence, read N- to C-terminus: DNA-directed RNA polymerase subunit beta (1070 aa).

Belongs to the RNA polymerase beta chain family. In terms of assembly, in plastids the minimal PEP RNA polymerase catalytic core is composed of four subunits: alpha, beta, beta', and beta''. When a (nuclear-encoded) sigma factor is associated with the core the holoenzyme is formed, which can initiate transcription.

The protein localises to the plastid. It is found in the chloroplast. The enzyme catalyses RNA(n) + a ribonucleoside 5'-triphosphate = RNA(n+1) + diphosphate. Functionally, DNA-dependent RNA polymerase catalyzes the transcription of DNA into RNA using the four ribonucleoside triphosphates as substrates. The polypeptide is DNA-directed RNA polymerase subunit beta (Dioscorea elephantipes (Elephant's foot yam)).